The following is a 234-amino-acid chain: Probable chemoreceptor glutamine deamidase CheD (234 aa).

It belongs to the CheD family.

The enzyme catalyses L-glutaminyl-[protein] + H2O = L-glutamyl-[protein] + NH4(+). In terms of biological role, probably deamidates glutamine residues to glutamate on methyl-accepting chemotaxis receptors (MCPs), playing an important role in chemotaxis. The chain is Probable chemoreceptor glutamine deamidase CheD from Burkholderia pseudomallei (strain 1710b).